Consider the following 784-residue polypeptide: ATP-dependent zinc metalloprotease FTSH 9, chloroplastic/mitochondrial (784 aa).

Composition is skewed to low complexity over residues Met-1–Pro-12, Pro-24–Arg-34, and Pro-42–Pro-53. The transit peptide at Met-1–Ala-47 directs the protein to the chloroplast and mitochondrion. The disordered stretch occupies residues Met-1 to Ala-71. Positions Gln-54–Pro-69 are enriched in pro residues. The next 2 membrane-spanning stretches (helical) occupy residues Trp-104–Val-124 and Ile-267–Ala-287. Position 368 to 375 (Gly-368 to Thr-375) interacts with ATP. A Zn(2+)-binding site is contributed by His-601. The active site involves Glu-602. Zn(2+)-binding residues include His-605 and Asp-679.

The protein in the N-terminal section; belongs to the AAA ATPase family. This sequence in the C-terminal section; belongs to the peptidase M41 family. Requires Zn(2+) as cofactor.

Its subcellular location is the mitochondrion membrane. It is found in the plastid. The protein localises to the chloroplast thylakoid membrane. In terms of biological role, probable ATP-dependent zinc metallopeptidase. In Oryza sativa subsp. japonica (Rice), this protein is ATP-dependent zinc metalloprotease FTSH 9, chloroplastic/mitochondrial (FTSH9).